A 702-amino-acid chain; its full sequence is Elongation factor G (702 aa).

The 189-residue stretch at 8–196 (ERYRNIGISA…MKAIIWDEAS (189 aa)) folds into the tr-type G domain. Residues 17 to 24 (AHIDAGKT), 88 to 92 (DTPGH), and 142 to 145 (NKMD) contribute to the GTP site.

It belongs to the TRAFAC class translation factor GTPase superfamily. Classic translation factor GTPase family. EF-G/EF-2 subfamily.

Its subcellular location is the cytoplasm. Catalyzes the GTP-dependent ribosomal translocation step during translation elongation. During this step, the ribosome changes from the pre-translocational (PRE) to the post-translocational (POST) state as the newly formed A-site-bound peptidyl-tRNA and P-site-bound deacylated tRNA move to the P and E sites, respectively. Catalyzes the coordinated movement of the two tRNA molecules, the mRNA and conformational changes in the ribosome. The sequence is that of Elongation factor G (fusA) from Thiomonas delicata (Thiomonas cuprina).